A 107-amino-acid polypeptide reads, in one-letter code: Nucleoid-associated protein BMEA_A0033 (107 aa).

This sequence belongs to the YbaB/EbfC family. In terms of assembly, homodimer.

The protein resides in the cytoplasm. Its subcellular location is the nucleoid. In terms of biological role, binds to DNA and alters its conformation. May be involved in regulation of gene expression, nucleoid organization and DNA protection. This is Nucleoid-associated protein BMEA_A0033 from Brucella melitensis biotype 2 (strain ATCC 23457).